The sequence spans 476 residues: Siroheme synthase (476 aa).

The tract at residues 1–204 (MDYFPVFLNI…GKDQAAQDYL (204 aa)) is precorrin-2 dehydrogenase /sirohydrochlorin ferrochelatase. Residues 22–23 (SV) and 43–44 (PT) each bind NAD(+). Serine 129 bears the Phosphoserine mark. Positions 218–476 (GEVYLVGAGP…GNTPGYSKHP (259 aa)) are uroporphyrinogen-III C-methyltransferase. Position 227 (proline 227) interacts with S-adenosyl-L-methionine. Aspartate 250 serves as the catalytic Proton acceptor. The Proton donor role is filled by lysine 272. Residues 303–305 (GGD), isoleucine 308, 333–334 (TA), methionine 385, and glycine 414 contribute to the S-adenosyl-L-methionine site.

In the N-terminal section; belongs to the precorrin-2 dehydrogenase / sirohydrochlorin ferrochelatase family. The protein in the C-terminal section; belongs to the precorrin methyltransferase family.

It carries out the reaction uroporphyrinogen III + 2 S-adenosyl-L-methionine = precorrin-2 + 2 S-adenosyl-L-homocysteine + H(+). The catalysed reaction is precorrin-2 + NAD(+) = sirohydrochlorin + NADH + 2 H(+). The enzyme catalyses siroheme + 2 H(+) = sirohydrochlorin + Fe(2+). It functions in the pathway cofactor biosynthesis; adenosylcobalamin biosynthesis; precorrin-2 from uroporphyrinogen III: step 1/1. The protein operates within cofactor biosynthesis; adenosylcobalamin biosynthesis; sirohydrochlorin from precorrin-2: step 1/1. Its pathway is porphyrin-containing compound metabolism; siroheme biosynthesis; precorrin-2 from uroporphyrinogen III: step 1/1. It participates in porphyrin-containing compound metabolism; siroheme biosynthesis; siroheme from sirohydrochlorin: step 1/1. It functions in the pathway porphyrin-containing compound metabolism; siroheme biosynthesis; sirohydrochlorin from precorrin-2: step 1/1. Multifunctional enzyme that catalyzes the SAM-dependent methylations of uroporphyrinogen III at position C-2 and C-7 to form precorrin-2 via precorrin-1. Then it catalyzes the NAD-dependent ring dehydrogenation of precorrin-2 to yield sirohydrochlorin. Finally, it catalyzes the ferrochelation of sirohydrochlorin to yield siroheme. In Nitrosomonas eutropha (strain DSM 101675 / C91 / Nm57), this protein is Siroheme synthase.